Reading from the N-terminus, the 591-residue chain is CTP synthase 1 (591 aa).

At Lys-100 the chain carries N6-acetyllysine. The Glutamine amidotransferase type-1 domain occupies Ser-300–Tyr-554. Active-site for GATase activity residues include Cys-399, His-526, and Glu-528. Ser-562, Ser-568, Ser-571, Ser-573, Ser-574, Ser-575, Ser-578, and Ser-587 each carry phosphoserine. Positions Ser-562–Asp-591 are disordered. Positions Asp-569–Ser-578 are enriched in low complexity.

It belongs to the CTP synthase family. As to expression, widely expressed.

It localises to the cytoplasm. The protein localises to the cytosol. The catalysed reaction is UTP + L-glutamine + ATP + H2O = CTP + L-glutamate + ADP + phosphate + 2 H(+). It participates in pyrimidine metabolism; CTP biosynthesis via de novo pathway; CTP from UDP: step 2/2. With respect to regulation, activated by GTP and inhibited by CTP. Its function is as follows. This enzyme is involved in the de novo synthesis of CTP, a precursor of DNA, RNA and phospholipids. Catalyzes the ATP-dependent amination of UTP to CTP with either L-glutamine or ammonia as a source of nitrogen. This enzyme and its product, CTP, play a crucial role in the proliferation of activated lymphocytes and therefore in immunity. This is CTP synthase 1 from Homo sapiens (Human).